Consider the following 316-residue polypeptide: WSCD family member GA21586 (316 aa).

Residues 8–28 (FFGVSATIIIYIGGVLFLSMN) form a helical membrane-spanning segment. Asn-78, Asn-150, Asn-226, and Asn-232 each carry an N-linked (GlcNAc...) asparagine glycan.

It belongs to the WSCD family.

Its subcellular location is the membrane. This chain is WSCD family member GA21586, found in Drosophila pseudoobscura pseudoobscura (Fruit fly).